The chain runs to 329 residues: DNA-directed RNA polymerase subunit alpha (329 aa).

The alpha N-terminal domain (alpha-NTD) stretch occupies residues 1–234; that stretch reads MQGSVTEFLK…EQLDAFVELR (234 aa). Residues 248 to 329 form an alpha C-terminal domain (alpha-CTD) region; the sequence is FDPILLRPVD…WPPASLADDL (82 aa).

Belongs to the RNA polymerase alpha chain family. Homodimer. The RNAP catalytic core consists of 2 alpha, 1 beta, 1 beta' and 1 omega subunit. When a sigma factor is associated with the core the holoenzyme is formed, which can initiate transcription.

It catalyses the reaction RNA(n) + a ribonucleoside 5'-triphosphate = RNA(n+1) + diphosphate. DNA-dependent RNA polymerase catalyzes the transcription of DNA into RNA using the four ribonucleoside triphosphates as substrates. The sequence is that of DNA-directed RNA polymerase subunit alpha from Shewanella loihica (strain ATCC BAA-1088 / PV-4).